The following is a 29-amino-acid chain: Glucagon (29 aa).

The protein belongs to the glucagon family.

The protein localises to the secreted. Functionally, glucagon plays a key role in glucose metabolism and homeostasis. Regulates blood glucose by increasing gluconeogenesis and decreasing glycolysis. The polypeptide is Glucagon (gcg) (Callorhinchus milii (Ghost shark)).